A 309-amino-acid chain; its full sequence is Lipoyl synthase (309 aa).

7 residues coordinate [4Fe-4S] cluster: cysteine 56, cysteine 61, cysteine 67, cysteine 82, cysteine 86, cysteine 89, and serine 296. A Radical SAM core domain is found at 68 to 285; the sequence is FKRGTATFMI…RVAGLKMGFS (218 aa).

Belongs to the radical SAM superfamily. Lipoyl synthase family. It depends on [4Fe-4S] cluster as a cofactor.

The protein resides in the cytoplasm. The enzyme catalyses [[Fe-S] cluster scaffold protein carrying a second [4Fe-4S](2+) cluster] + N(6)-octanoyl-L-lysyl-[protein] + 2 oxidized [2Fe-2S]-[ferredoxin] + 2 S-adenosyl-L-methionine + 4 H(+) = [[Fe-S] cluster scaffold protein] + N(6)-[(R)-dihydrolipoyl]-L-lysyl-[protein] + 4 Fe(3+) + 2 hydrogen sulfide + 2 5'-deoxyadenosine + 2 L-methionine + 2 reduced [2Fe-2S]-[ferredoxin]. It participates in protein modification; protein lipoylation via endogenous pathway; protein N(6)-(lipoyl)lysine from octanoyl-[acyl-carrier-protein]: step 2/2. Catalyzes the radical-mediated insertion of two sulfur atoms into the C-6 and C-8 positions of the octanoyl moiety bound to the lipoyl domains of lipoate-dependent enzymes, thereby converting the octanoylated domains into lipoylated derivatives. This chain is Lipoyl synthase, found in Syntrophotalea carbinolica (strain DSM 2380 / NBRC 103641 / GraBd1) (Pelobacter carbinolicus).